Reading from the N-terminus, the 127-residue chain is Holo-[acyl-carrier-protein] synthase (127 aa).

Mg(2+)-binding residues include Asp9 and Glu58.

Belongs to the P-Pant transferase superfamily. AcpS family. Mg(2+) is required as a cofactor.

The protein localises to the cytoplasm. The enzyme catalyses apo-[ACP] + CoA = holo-[ACP] + adenosine 3',5'-bisphosphate + H(+). In terms of biological role, transfers the 4'-phosphopantetheine moiety from coenzyme A to a Ser of acyl-carrier-protein. The sequence is that of Holo-[acyl-carrier-protein] synthase from Shewanella putrefaciens (strain CN-32 / ATCC BAA-453).